Consider the following 349-residue polypeptide: MDTRADAEIKAMELIGIGVLPLAMKAIIELNVLEILSKAGPDTQLTAAQIVTDIPTTNPNAGFQLDRILRLLASHSVLSSSITKSGERVYGLTPMCKYFLPDQDGVSLAPMVVTIHDKVLLQSWHYLKDSVLKQGSLPFTEAFGMSPFEYSVSDTRFNKVFNAGMFDHSTLCMRDVLQRYKGFQGLGELVDVGGGTGGSLKMILSQYPNLKGINFDLPHVVADAPSFPGVKHIGGDMFESVPSGDAIFMKWILHDWDDGRCLTLLKNCWNALPEHGKVIIVEWILPSDAATDPTSRRVFTADLMMLAFSEGGKERTLGDYGALAKEAGFTTVKDFPCANGISVIEFHKK.

S-adenosyl-L-homocysteine is bound by residues G193, D216, D236, M237, M249, and K250. H254 serves as the catalytic Proton acceptor. Catalysis depends on residues E282 and E314.

Belongs to the class I-like SAM-binding methyltransferase superfamily. Cation-independent O-methyltransferase family. COMT subfamily. Homodimer. In terms of tissue distribution, mostly expressed in stems, and, to a lower extent, in leaves.

It catalyses the reaction (-)-5'-demethylyatein + S-adenosyl-L-methionine = (-)-yatein + S-adenosyl-L-homocysteine + H(+). It functions in the pathway aromatic compound metabolism; phenylpropanoid biosynthesis. Its function is as follows. O-methyltransferase involved in the biosynthesis of etoposide, a chemotherapeutic compound of the topoisomerase inhibitor family. Catalyzes the methylation of (-)-5'-demethylyatein to produce (-)-yatein. The sequence is that of Desmethyl-yatein O-methyltransferase from Sinopodophyllum hexandrum (Himalayan may apple).